We begin with the raw amino-acid sequence, 189 residues long: Cold-regulated 413 plasma membrane protein 3 (189 aa).

Over 1–24 the chain is Extracellular; that stretch reads MENIEYLNEIQAVAGKLIHSYGVP. The helical transmembrane segment at 25-45 threads the bilayer; that stretch reads VMITLFLRWLASIVAVFLMIL. Residues 46 to 55 lie on the Cytoplasmic side of the membrane; that stretch reads DQTKWKYSNN. A helical membrane pass occupies residues 56–76; sequence IMASLLAPYLFSSLPIVIFQV. Residues 77-79 are Extracellular-facing; the sequence is LRN. Residues 80–100 traverse the membrane as a helical segment; the sequence is GVGKWIALLTVILRLFLPNHF. The Cytoplasmic segment spans residues 101 to 104; sequence HESL. Residues 105-125 traverse the membrane as a helical segment; the sequence is EIPGATILLIVVTPSDIGAIF. Over 126–168 the chain is Extracellular; it reads RDDLRYTGGDVCLLTSFYLINKHTKACGGIKNSFTQKDKVTYS. A helical transmembrane segment spans residues 169–189; it reads ICLWILFVYPILSSFAALFYL.

This sequence belongs to the Cold-regulated 413 protein family.

Its subcellular location is the cell membrane. The chain is Cold-regulated 413 plasma membrane protein 3 from Arabidopsis thaliana (Mouse-ear cress).